The following is a 60-amino-acid chain: Large ribosomal subunit protein bL32 (60 aa).

Residues Met-1 to Asp-60 are disordered. Over residues Arg-49–Asp-60 the composition is skewed to basic residues.

It belongs to the bacterial ribosomal protein bL32 family.

The protein is Large ribosomal subunit protein bL32 of Nitrosomonas eutropha (strain DSM 101675 / C91 / Nm57).